An 850-amino-acid polypeptide reads, in one-letter code: Transforming growth factor beta receptor type 3 (850 aa).

Positions 1–22 (MAVTSHHMVPVFVLMSACLATA) are cleaved as a signal peptide. At 23 to 785 (GPEPSTRCEL…QIFHGLDTLT (763 aa)) the chain is on the extracellular side. A disulfide bond links Cys54 and Cys199. N-linked (GlcNAc...) asparagine glycosylation is found at Asn143 and Asn491. One can recognise a ZP domain in the interval 454–728 (KCDNEKMVVA…PKCVTPDDAC (275 aa)). A disordered region spans residues 528–557 (SPGDSSGWPDGYEDLESGDNGFPGDTDEGE). O-linked (Xyl...) (glycosaminoglycan) serine glycans are attached at residues Ser533 and Ser544. N-linked (GlcNAc...) asparagine glycans are attached at residues Asn570, Asn589, and Asn696. Intrachain disulfides connect Cys638–Cys704, Cys659–Cys728, and Cys709–Cys721. Residues 735-749 (MIWTMMQNKKTFTKP) are interaction with TGF-beta ligand. A helical membrane pass occupies residues 786-808 (VMGIAFAAFVIGALLTGALWYIY). Over 809 to 850 (SHTGETARRQQVPTSPPASENSSAAHSIGSTQSTPCSSSSTA) the chain is Cytoplasmic. Residues 817 to 833 (RQQVPTSPPASENSSAA) show a composition bias toward polar residues. Positions 817–850 (RQQVPTSPPASENSSAAHSIGSTQSTPCSSSSTA) are disordered. The span at 835–850 (SIGSTQSTPCSSSSTA) shows a compositional bias: low complexity. Thr839 is modified (phosphothreonine).

Forms homodimers and homooligomers. Interacts with DYNLT4. Interacts with integrin ITGA5:ITGB1; this interaction promotes the internalization and trafficking of ITGA5:ITGB1 into endocytic vesicles. Interacts with TGFB1, BMP2, BMP5, BMP7 or GDF5 and inhibin A via the ligand binding domains. Interacts with ALK3/BMPR1A; this interaction results in the cell surface retention of BMPR1A. Interacts with ALK6/BMPR1B; this interaction enhances BMPR1B-mediated stimulation of the BMP signaling pathway. Interacts with the scaffolding protein beta-arrestin2/ARRB2; this interaction mediates internalization of TGFBR3 and thus regulates migration, actin cytoskeleton and activation of CDC42. Extensively modified by glycosaminoglycan groups (GAG). Post-translationally, phosphorylated in the cytoplasmic domain by the type II receptor TGFBR2 at THR-839 to mediate recruitment of ARRB2 and subsequent internalization of TGFBR2 and TGFBR3.

The protein resides in the cell membrane. Its subcellular location is the secreted. It is found in the extracellular space. The protein localises to the extracellular matrix. Cell surface receptor that regulates diverse cellular processes including cell proliferation, differentiation, migration, and apoptosis. Initiates BMP, inhibin, and TGF-beta signaling pathways by interacting with different ligands including TGFB1, BMP2, BMP5, BMP7 or GDF5. Alternatively, acts as a cell surface coreceptor for BMP ligands, serving to enhance ligand binding by differentially regulating BMPR1A/ALK3 and BMPR1B/ALK6 receptor trafficking. Promotes epithelial cell adhesion, focal adhesion formation and integrin signaling during epithelial cell spreading on fibronectin. By interacting with the scaffolding protein beta-arrestin2/ARRB2, regulates migration or actin cytoskeleton and promotes the activation of CDC42 as well as the inhibition of NF-kappa-B. In gonadotrope cells, acts as an inhibin A coreceptor and regulates follicle-stimulating hormone (FSH) levels and female fertility. Plays a role in the inhibition of directed and random cell migration in epithelial cells by altering the actin cytoskeletal organization. Participates in epithelial-mesenchymal transformation (EMT) upon binding to BMP2 or TGFB2, by activating the PAR6/SMURF1/RHOA pathway. The chain is Transforming growth factor beta receptor type 3 (Tgfbr3) from Mus musculus (Mouse).